The sequence spans 914 residues: Eukaryotic initiation factor 4F subunit p130 (914 aa).

A compositionally biased stretch (pro residues) spans 1-12 (MTDQRGPPPPHP). Disordered stretches follow at residues 1 to 84 (MTDQ…YNNR), 128 to 205 (PPYT…NEAV), 240 to 351 (ERKK…VNKS), and 457 to 535 (IARN…LVPS). Positions 26 to 44 (NQYSGANNSQPNNHYNENL) are enriched in polar residues. A compositionally biased stretch (low complexity) spans 59-73 (KNGKYGTNKYNNRNN). At Ser-74 the chain carries Phosphoserine. A compositionally biased stretch (low complexity) spans 145-155 (PKTTKIEITTK). The segment covering 156-195 (TGERLNLKKFHEEKKASKGEEKNDGVEQKSKSGTPFEKEA) has biased composition (basic and acidic residues). A Phosphothreonine modification is found at Thr-196. The interaction with PAB1 stretch occupies residues 201–315 (ANEAVKDTLT…TGSVTKSVTF (115 aa)). The segment covering 240–263 (ERKKNGLISETEKKQETSNHDNTD) has biased composition (basic and acidic residues). Composition is skewed to polar residues over residues 298–325 (SVKT…SSSQ) and 339–348 (ISDTTGGKTV). The residue at position 301 (Thr-301) is a Phosphothreonine. Residues 496–529 (RMGDDRRSNRGYTSRKDREKAAEKAEEQAPKEEI) show a composition bias toward basic and acidic residues. Ser-503 carries the phosphoserine modification. One can recognise an MIF4G domain in the interval 567 to 810 (ERKMKSLLNK…IDVKELREIK (244 aa)). The segment at 833-914 (QLRQKKNSQR…ALMNNDGDSD (82 aa)) is disordered. Positions 841–867 (QRSNSRFNNHNQSNSNRYSSNRRNMQN) are enriched in low complexity. Polar residues predominate over residues 868-886 (TQRDSFASTKTGSFRNNQR). Ser-913 is subject to Phosphoserine.

Belongs to the eukaryotic initiation factor 4G family. Component of the eIF4F complex, which composition varies with external and internal environmental conditions. It is composed of at least eIF4A (TIF1/TIF2), eIF4E (TIF45) and eIF4G (TIF4631 or TIF4632). Interacts with PAT1 in a RNA-dependent manner.

It localises to the cytoplasm. Functionally, component of the eIF4F complex, which interacts with the mRNA cap structure and serves as an initial point of assembly for the translation apparatus. Stimulates translation by interaction with polyadenylate-binding protein PAB1, bringing the 5'- and 3'-ends of the mRNA in proximity. The formation of this circular mRNP structure appears to be critical for the synergistic effects of the cap and the poly(A) tail in facilitating translation initiation, recycling of ribosomes, and mRNA stability. TIF4632 is probably essential when TIF4631 is missing. In Saccharomyces cerevisiae (strain ATCC 204508 / S288c) (Baker's yeast), this protein is Eukaryotic initiation factor 4F subunit p130.